A 630-amino-acid chain; its full sequence is tRNA uridine 5-carboxymethylaminomethyl modification enzyme MnmG (630 aa).

13–18 (GGGHAG) contacts FAD. NAD(+) is bound at residue 273–287 (GPRYCPSIEDKIHRF).

This sequence belongs to the MnmG family. Homodimer. Heterotetramer of two MnmE and two MnmG subunits. FAD is required as a cofactor.

It localises to the cytoplasm. Its function is as follows. NAD-binding protein involved in the addition of a carboxymethylaminomethyl (cmnm) group at the wobble position (U34) of certain tRNAs, forming tRNA-cmnm(5)s(2)U34. This Pseudomonas aeruginosa (strain ATCC 15692 / DSM 22644 / CIP 104116 / JCM 14847 / LMG 12228 / 1C / PRS 101 / PAO1) protein is tRNA uridine 5-carboxymethylaminomethyl modification enzyme MnmG.